A 302-amino-acid chain; its full sequence is Quinolinate synthase (302 aa).

The iminosuccinate site is built by H24 and S41. A [4Fe-4S] cluster-binding site is contributed by C86. Residues 112–114 and S129 each bind iminosuccinate; that span reads YVN. C173 contacts [4Fe-4S] cluster. Residues 199–201 and T216 contribute to the iminosuccinate site; that span reads HPE. Residue C259 participates in [4Fe-4S] cluster binding.

The protein belongs to the quinolinate synthase family. Type 2 subfamily. [4Fe-4S] cluster is required as a cofactor.

It is found in the cytoplasm. The catalysed reaction is iminosuccinate + dihydroxyacetone phosphate = quinolinate + phosphate + 2 H2O + H(+). The protein operates within cofactor biosynthesis; NAD(+) biosynthesis; quinolinate from iminoaspartate: step 1/1. Catalyzes the condensation of iminoaspartate with dihydroxyacetone phosphate to form quinolinate. The protein is Quinolinate synthase of Thermococcus onnurineus (strain NA1).